The sequence spans 171 residues: uncharacterized protein (171 aa).

It belongs to the mimivirus R24/R907 family.

This is an uncharacterized protein from Acanthamoeba polyphaga (Amoeba).